The chain runs to 231 residues: MKRAVVVFSGGQDSTTCLVQALQQYDEVHCVTFDYGQRHRAEIDVARELALKLGARAHKVLDVTLLNELAVSSLTRDSIPVPDYEPEADGIPNTFVPGRNILFLTLAAIYAYQVKAEAVITGVCETDFSGYPDCRDEFVKALNHAVSLGMAKDIRFETPLMWIDKAETWALADYYGKLDLVRNETLTCYNGIKGDGCGHCAACNLRANGLNHYLADKPTVMAAIKQKTGLK.

Residue 8–18 participates in ATP binding; that stretch reads FSGGQDSTTCL. C188, C197, C200, and C203 together coordinate Zn(2+).

Belongs to the QueC family. Zn(2+) serves as cofactor.

It catalyses the reaction 7-carboxy-7-deazaguanine + NH4(+) + ATP = 7-cyano-7-deazaguanine + ADP + phosphate + H2O + H(+). It participates in purine metabolism; 7-cyano-7-deazaguanine biosynthesis. Its function is as follows. Catalyzes the ATP-dependent conversion of 7-carboxy-7-deazaguanine (CDG) to 7-cyano-7-deazaguanine (preQ(0)). This chain is 7-cyano-7-deazaguanine synthase, found in Escherichia coli O127:H6 (strain E2348/69 / EPEC).